The following is an 855-amino-acid chain: Inactive rhomboid protein 1 (855 aa).

Residues 1–36 (MSEARRDSTSSLQRKKPPWLKLDIPSAAPPAAEEPS) are disordered. The Cytoplasmic portion of the chain corresponds to 1–411 (MSEARRDSTS…HRPFFTYWLT (411 aa)). Positions 25–36 (PSAAPPAAEEPS) are enriched in low complexity. Residues serine 76 and serine 176 each carry the phosphoserine modification. Phosphothreonine is present on residues threonine 180 and threonine 183. Serine 390 is modified (phosphoserine). Residues 412–432 (FVHSLVTVLAVCIYGIAPVGF) traverse the membrane as a helical segment. The Lumenal segment spans residues 433-655 (SQHETVDSVL…NPEVPDQFYR (223 aa)). The N-linked (GlcNAc...) asparagine glycan is linked to asparagine 583. Residues 656-676 (LWLSLFLHAGILHCLVSICFQ) traverse the membrane as a helical segment. At 677–691 (MTVLRDLEKLAGWHR) the chain is on the cytoplasmic side. A helical transmembrane segment spans residues 692–712 (IAIIYLLSGVTGNLASAIFLP). The Lumenal portion of the chain corresponds to 713–714 (YR). The chain crosses the membrane as a helical span at residues 715–735 (AEVGPAGSQFGILACLFVELF). The Cytoplasmic segment spans residues 736 to 746 (QSWQILARPWR). The helical transmembrane segment at 747 to 767 (AFFKLLAVVLFLFTFGLLPWI) threads the bilayer. Residues 768 to 772 (DNFAH) lie on the Lumenal side of the membrane. A helical membrane pass occupies residues 773–793 (ISGFISGLFLSFAFLPYISFG). Over 794–803 (KFDLYRKRCQ) the chain is Cytoplasmic. The helical transmembrane segment at 804-824 (IIVFQVVFLGLLAGLVVLFYF) threads the bilayer. Residues 825 to 855 (YPVRCEWCEFLTCIPFTDKFCEKYELDAQLH) lie on the Lumenal side of the membrane.

The protein belongs to the peptidase S54 family. In terms of assembly, homodimer, or homooligomer. Interacts with TGFA and HBEGF. Interacts with EGF; may retain EGF in the endoplasmic reticulum and regulates its degradation through the endoplasmic reticulum-associated degradation (ERAD). Interacts (via cytoplasmic N-terminus) with FRMD8/iTAP; this interaction leads to mutual protein stabilization. Interacts with ADAM17/TACE.

It is found in the endoplasmic reticulum membrane. The protein localises to the golgi apparatus membrane. Its function is as follows. Regulates ADAM17 protease, a sheddase of the epidermal growth factor (EGF) receptor ligands and TNF, thereby plays a role in sleep, cell survival, proliferation, migration and inflammation. Does not exhibit any protease activity on its own. The protein is Inactive rhomboid protein 1 (RHBDF1) of Plecturocebus moloch (Dusky titi monkey).